A 477-amino-acid polypeptide reads, in one-letter code: Ribulose bisphosphate carboxylase large chain (477 aa).

Residues 1–2 constitute a propeptide that is removed on maturation; it reads MS. N-acetylproline is present on proline 3. An N6,N6,N6-trimethyllysine modification is found at lysine 14. Residues asparagine 123 and threonine 173 each contribute to the substrate site. The Proton acceptor role is filled by lysine 175. Lysine 177 is a binding site for substrate. Positions 201, 203, and 204 each coordinate Mg(2+). At lysine 201 the chain carries N6-carboxylysine. Catalysis depends on histidine 294, which acts as the Proton acceptor. 3 residues coordinate substrate: arginine 295, histidine 327, and serine 379.

Belongs to the RuBisCO large chain family. Type I subfamily. In terms of assembly, heterohexadecamer of 8 large chains and 8 small chains; disulfide-linked. The disulfide link is formed within the large subunit homodimers. Requires Mg(2+) as cofactor. Post-translationally, the disulfide bond which can form in the large chain dimeric partners within the hexadecamer appears to be associated with oxidative stress and protein turnover.

The protein localises to the plastid. The protein resides in the chloroplast. It catalyses the reaction 2 (2R)-3-phosphoglycerate + 2 H(+) = D-ribulose 1,5-bisphosphate + CO2 + H2O. The enzyme catalyses D-ribulose 1,5-bisphosphate + O2 = 2-phosphoglycolate + (2R)-3-phosphoglycerate + 2 H(+). Its function is as follows. RuBisCO catalyzes two reactions: the carboxylation of D-ribulose 1,5-bisphosphate, the primary event in carbon dioxide fixation, as well as the oxidative fragmentation of the pentose substrate in the photorespiration process. Both reactions occur simultaneously and in competition at the same active site. This is Ribulose bisphosphate carboxylase large chain from Atropa belladonna (Belladonna).